A 608-amino-acid polypeptide reads, in one-letter code: MAAAAAAVGPGAGGAGSAVPGGAGPCATVSVFPGARLLTIGDANGEIQRHAEQQALRLEVRAGPDSAGIALYSHEDVCVFKCSVSRETECSRVGKQSFIITLGCNSVLIQFATPNDFCSFYNILKTCRGHTLERSVFSERTEESSAVQYFQFYGYLSQQQNMMQDYVRTGTYQRAILQNHTDFKDKIVLDVGCGSGILSFFAAQAGARKIYAVEASTMAQHAEVLVKSNNLTDRIVVIPGKVEEVSLPEQVDIIISEPMGYMLFNERMLESYLHAKKYLKPSGNMFPTIGDVHLAPFTDEQLYMEQFTKANFWYQPSFHGVDLSALRGAAVDEYFRQPVVDTFDIRILMAKSVKYTVNFLEAKEGDLHRIEIPFKFHMLHSGLVHGLAFWFDVAFIGSIMTVWLSTAPTEPLTHWYQVRCLFQSPLFAKAGDTLSGTCLLIANKRQSYDISIVAQVDQTGSKSSNLLDLKNPFFRYTGTTPSPPPGSHYTSPSENMWNTGSTYNLSSGMAVAGMPTAYDLSSVIASGSSVGHNNLIPLANTGIVNHTHSRMGSIMSTGIVQGSSGAQGSGGGSTSAHYAVNSQFTMGGPAISMASPMSIPTNTMHYGS.

An N-acetylalanine modification is found at A2. Positions 27-138 are interaction with C9orf72; it reads ATVSVFPGAR…GHTLERSVFS (112 aa). An SAM-dependent MTase PRMT-type domain is found at 146 to 453; that stretch reads AVQYFQFYGY…KRQSYDISIV (308 aa). S-adenosyl-L-methionine is bound by residues Q159, R168, G192, and E214. S216 bears the Phosphoserine mark. A Glycyl lysine isopeptide (Lys-Gly) (interchain with G-Cter in ubiquitin) cross-link involves residue K227. S-adenosyl-L-methionine-binding residues include E243 and S271. The required for nuclear translocation stretch occupies residues 346-379; sequence RILMAKSVKYTVNFLEAKEGDLHRIEIPFKFHML. A transactivation domain region spans residues 499–608; the sequence is TGSTYNLSSG…IPTNTMHYGS (110 aa). The residue at position 550 (R550) is a Dimethylated arginine.

Belongs to the class I-like SAM-binding methyltransferase superfamily. Protein arginine N-methyltransferase family. In terms of assembly, homodimer. Interacts with NR1H4. Interacts with SNRPC. Interacts with the C-terminus of NCOA2/GRIP1, NCO3/ACTR and NCOA1/SRC1. Part of a complex consisting of CARM1, EP300/P300 and NCOA2/GRIP1. Interacts with FLII, TP53, myogenic factor MEF2, EP300/P300, TRIM24, CREBBP and CTNNB1. Interacts with RELA. Identified in a complex containing CARM1, TRIM24 and NCOA2/GRIP1. Interacts with NCOA3/SRC3. Interacts with SKP2. Interacts (via PH domain-like fold) with C9orf72. Interacts with PARP1; promoting PARP1 recruimtent to replication forks. As to quaternary structure, (Microbial infection) Interacts with HTLV-1 protein Tax. In terms of processing, auto-methylated on Arg-550. Methylation enhances transcription coactivator activity. Methylation is required for its role in the regulation of pre-mRNA alternative splicing. Post-translationally, phosphorylation at Ser-216 is strongly increased during mitosis, and decreases rapidly to a very low, basal level after entry into the G1 phase of the cell cycle. Phosphorylation at Ser-216 may promote location in the cytosol. Phosphorylation at Ser-216 interferes with S-adenosyl-L-methionine binding and strongly reduces methyltransferase activity. Ubiquitinated by E3 ubiquitin-protein ligase complex containing FBXO9 at Lys-227; leading to proteasomal degradation. Overexpressed in prostate adenocarcinomas and high-grade prostatic intraepithelial neoplasia.

It is found in the nucleus. Its subcellular location is the cytoplasm. The protein localises to the chromosome. It carries out the reaction L-arginyl-[protein] + 2 S-adenosyl-L-methionine = N(omega),N(omega)-dimethyl-L-arginyl-[protein] + 2 S-adenosyl-L-homocysteine + 2 H(+). Methylation of H3R17 (H3R17me) by CARM1 is stimulated by preacetylation of H3 'Lys-18' (H3K18ac) H3 'Lys-23' (H3K23ac) by EP300 and blocked by citrullination of H3 'Arg-17' (H3R17ci) by PADI4. Its function is as follows. Methylates (mono- and asymmetric dimethylation) the guanidino nitrogens of arginyl residues in several proteins involved in DNA packaging, transcription regulation, pre-mRNA splicing, and mRNA stability. Recruited to promoters upon gene activation together with histone acetyltransferases from EP300/P300 and p160 families, methylates histone H3 at 'Arg-17' (H3R17me), forming mainly asymmetric dimethylarginine (H3R17me2a), leading to activation of transcription via chromatin remodeling. During nuclear hormone receptor activation and TCF7L2/TCF4 activation, acts synergically with EP300/P300 and either one of the p160 histone acetyltransferases NCOA1/SRC1, NCOA2/GRIP1 and NCOA3/ACTR or CTNNB1/beta-catenin to activate transcription. During myogenic transcriptional activation, acts together with NCOA3/ACTR as a coactivator for MEF2C. During monocyte inflammatory stimulation, acts together with EP300/P300 as a coactivator for NF-kappa-B. Acts as a coactivator for PPARG, promotes adipocyte differentiation and the accumulation of brown fat tissue. Plays a role in the regulation of pre-mRNA alternative splicing by methylation of splicing factors. Also seems to be involved in p53/TP53 transcriptional activation. Methylates EP300/P300, both at 'Arg-2142', which may loosen its interaction with NCOA2/GRIP1, and at 'Arg-580' and 'Arg-604' in the KIX domain, which impairs its interaction with CREB and inhibits CREB-dependent transcriptional activation. Also methylates arginine residues in RNA-binding proteins PABPC1, ELAVL1 and ELAV4, which may affect their mRNA-stabilizing properties and the half-life of their target mRNAs. Acts as a transcriptional coactivator of ACACA/acetyl-CoA carboxylase by enriching H3R17 methylation at its promoter, thereby positively regulating fatty acid synthesis. Independently of its methyltransferase activity, involved in replication fork progression: promotes PARP1 recruitment to replication forks, leading to poly-ADP-ribosylation of chromatin at replication forks and reduced fork speed. The polypeptide is Histone-arginine methyltransferase CARM1 (CARM1) (Homo sapiens (Human)).